Here is a 208-residue protein sequence, read N- to C-terminus: Small ribosomal subunit protein uS4 (208 aa).

The S4 RNA-binding domain occupies 98 to 163 (QRLDNVVYRM…NPQITRAIEL (66 aa)).

Belongs to the universal ribosomal protein uS4 family. In terms of assembly, part of the 30S ribosomal subunit. Contacts protein S5. The interaction surface between S4 and S5 is involved in control of translational fidelity.

In terms of biological role, one of the primary rRNA binding proteins, it binds directly to 16S rRNA where it nucleates assembly of the body of the 30S subunit. Its function is as follows. With S5 and S12 plays an important role in translational accuracy. This chain is Small ribosomal subunit protein uS4, found in Campylobacter jejuni (strain RM1221).